We begin with the raw amino-acid sequence, 449 residues long: Serine/threonine-protein phosphatase 2A activator 2 (449 aa).

Disordered stretches follow at residues 1 to 72 (MDSS…DPST) and 378 to 416 (MSEQ…PTGW). Pro residues predominate over residues 54–69 (NPTPVPETPALPPRPD). The span at 389–403 (EENEEEGGEVEVYDD) shows a compositional bias: acidic residues.

This sequence belongs to the PTPA-type PPIase family.

The protein localises to the cytoplasm. The enzyme catalyses [protein]-peptidylproline (omega=180) = [protein]-peptidylproline (omega=0). Its function is as follows. PPIases accelerate the folding of proteins. It catalyzes the cis-trans isomerization of proline imidic peptide bonds in oligopeptides. Acts as a regulatory subunit for PP2A-like phosphatases modulating their activity or substrate specificity, probably by inducing a conformational change in the catalytic subunit, a direct target of the PPIase. Can reactivate inactive phosphatase PP2A-phosphatase methylesterase complexes (PP2Ai) in presence of ATP and Mg(2+) by dissociating the inactive form from the complex. This chain is Serine/threonine-protein phosphatase 2A activator 2 (rrd-2), found in Neurospora crassa (strain ATCC 24698 / 74-OR23-1A / CBS 708.71 / DSM 1257 / FGSC 987).